Here is a 344-residue protein sequence, read N- to C-terminus: Geranylgeranyl transferase type-2 subunit alpha (344 aa).

PFTA repeat units lie at residues 44–78, 89–123, 125–159, 165–199, 214–248, and 266–293; these read YSEG…NDVF, LLDN…NAPY, NWNY…QIER, LAKK…TILN, ILEQ…HCNP, and YLQK…SLVN.

Belongs to the protein prenyltransferase subunit alpha family. In terms of assembly, heterodimer of an alpha and a beta subunit.

It carries out the reaction geranylgeranyl diphosphate + L-cysteinyl-[protein] = S-geranylgeranyl-L-cysteinyl-[protein] + diphosphate. Catalyzes the transfer of a geranyl-geranyl moiety from geranyl-geranyl pyrophosphate to proteins having the C-terminal-XCC or -XCXC, where both cysteines may become modified. The polypeptide is Geranylgeranyl transferase type-2 subunit alpha (bet4) (Schizosaccharomyces pombe (strain 972 / ATCC 24843) (Fission yeast)).